Consider the following 588-residue polypeptide: Outer membrane transporter CdiB (588 aa).

Residues 104–179 enclose the POTRA domain; sequence FTVSSIVVSG…GVLHITVMEG (76 aa).

This sequence belongs to the TPS (TC 1.B.20) family.

The protein resides in the cell outer membrane. Functionally, potential outer membrane protein component of a toxin-immunity protein module, which functions as a cellular contact-dependent growth inhibition (CDI) system. CDI modules allow bacteria to communicate with and inhibit the growth of closely related neighboring bacteria in a contact-dependent fashion. This protein may be required for secretion and assembly of the CdiA toxin protein. Inhibitory cells must be in logarithmic (not stationary) phase to inhibit growth of their targets, while the presence of P or S but not type 1 pili protects the target cells against growth inhibition. In terms of biological role, probable member of a two partner secretion pathway (TPS) in which it mediates the secretion of CdiA. This Escherichia coli protein is Outer membrane transporter CdiB.